Here is a 690-residue protein sequence, read N- to C-terminus: Elongation factor G (690 aa).

The 275-residue stretch at Asp8–Leu282 folds into the tr-type G domain. GTP contacts are provided by residues Ala17–Thr24, Asp81–His85, and Asn135–Asp138.

The protein belongs to the TRAFAC class translation factor GTPase superfamily. Classic translation factor GTPase family. EF-G/EF-2 subfamily.

It localises to the cytoplasm. In terms of biological role, catalyzes the GTP-dependent ribosomal translocation step during translation elongation. During this step, the ribosome changes from the pre-translocational (PRE) to the post-translocational (POST) state as the newly formed A-site-bound peptidyl-tRNA and P-site-bound deacylated tRNA move to the P and E sites, respectively. Catalyzes the coordinated movement of the two tRNA molecules, the mRNA and conformational changes in the ribosome. This Caldanaerobacter subterraneus subsp. tengcongensis (strain DSM 15242 / JCM 11007 / NBRC 100824 / MB4) (Thermoanaerobacter tengcongensis) protein is Elongation factor G.